Here is a 660-residue protein sequence, read N- to C-terminus: Probable cation-transporting P-type ATPase J (660 aa).

5 helical membrane passes run 33 to 53, 60 to 80, 94 to 114, 261 to 281, and 292 to 312; these read WAAL…CGAP, LFLA…LQAL, AAIG…IVIF, IGMV…GETL, and MIVA…LAAI. Residue Asp340 is the 4-aspartylphosphate intermediate of the active site. Mg(2+) is bound by residues Asp544 and Asp548. Residues 598–618 traverse the membrane as a helical segment; it reads IVVANLIVAVTFIAGLVVWDL.

This sequence belongs to the cation transport ATPase (P-type) (TC 3.A.3) family. Type IB subfamily.

The protein resides in the cell membrane. It catalyses the reaction ATP + H2O = ADP + phosphate + H(+). The chain is Probable cation-transporting P-type ATPase J (ctpJ) from Mycobacterium tuberculosis (strain CDC 1551 / Oshkosh).